A 312-amino-acid chain; its full sequence is Carbonic anhydrase 4 (312 aa).

A signal peptide spans M1–R18. The Alpha-carbonic anhydrase domain maps to S21–G285. Intrachain disulfides connect C24–C36 and C46–C229. N-linked (GlcNAc...) asparagine glycosylation is present at N33. The Proton donor/acceptor role is filled by H88. Residues H115, H117, and H140 each coordinate Zn(2+). N-linked (GlcNAc...) asparagine glycosylation is found at N152 and N195. T225–T226 lines the substrate pocket. The N-linked (GlcNAc...) asparagine glycan is linked to N265. Residue S284 is the site of GPI-anchor amidated serine attachment. Positions G285–R312 are cleaved as a propeptide — removed in mature form.

The protein belongs to the alpha-carbonic anhydrase family. Interacts with SLC4A4. Zn(2+) is required as a cofactor.

It localises to the cell membrane. The enzyme catalyses hydrogencarbonate + H(+) = CO2 + H2O. Inhibited by acetazolamide. In terms of biological role, catalyzes the reversible hydration of carbon dioxide into bicarbonate and protons and thus is essential to maintaining intracellular and extracellular pH. May stimulate the sodium/bicarbonate transporter activity of SLC4A4 that acts in pH homeostasis. It is essential for acid overload removal from the retina and retina epithelium, and acid release in the choriocapillaris in the choroid. The polypeptide is Carbonic anhydrase 4 (CA4) (Bos taurus (Bovine)).